Here is an 831-residue protein sequence, read N- to C-terminus: Periplasmic nitrate reductase (831 aa).

The tat-type signal signal peptide spans 1 to 29 (MTVTRRDFVRHQALATAAAAAGVAVPAAA). The region spanning 41 to 97 (LVWSKAPCRFCGTGCSVNVATKEGRVVATHGDIKSPVNRGLNCVKGYFLSKVMYGED) is the 4Fe-4S Mo/W bis-MGD-type domain. [4Fe-4S] cluster-binding residues include Cys-48, Cys-51, Cys-55, and Cys-83. Residues Lys-85, Gln-152, Asn-177, Cys-181, 214–221 (WGSNMAEM), 245–249 (STYEH), 264–266 (QSD), Met-375, Gln-379, Asn-485, 511–512 (SD), Lys-534, Asp-561, and 721–730 (TGRVIEHWHS) contribute to the Mo-bis(molybdopterin guanine dinucleotide) site. Trp-797 lines the substrate pocket. Mo-bis(molybdopterin guanine dinucleotide) is bound by residues Asn-805 and Lys-822.

This sequence belongs to the prokaryotic molybdopterin-containing oxidoreductase family. NasA/NapA/NarB subfamily. As to quaternary structure, component of the periplasmic nitrate reductase NapAB complex composed of NapA and NapB. [4Fe-4S] cluster is required as a cofactor. Mo-bis(molybdopterin guanine dinucleotide) serves as cofactor. Predicted to be exported by the Tat system. The position of the signal peptide cleavage has not been experimentally proven.

The protein localises to the periplasm. It carries out the reaction 2 Fe(II)-[cytochrome] + nitrate + 2 H(+) = 2 Fe(III)-[cytochrome] + nitrite + H2O. In terms of biological role, catalytic subunit of the periplasmic nitrate reductase complex NapAB. Receives electrons from NapB and catalyzes the reduction of nitrate to nitrite. This Saccharophagus degradans (strain 2-40 / ATCC 43961 / DSM 17024) protein is Periplasmic nitrate reductase.